The primary structure comprises 475 residues: FAD-dependent monooxygenase spyC (475 aa).

A signal peptide spans 1 to 24 (MTAKPPFKVIIVGGSIAGLTLAHC). Glu36, Gly50, Arg109, Asp310, and Ala323 together coordinate FAD. The helical transmembrane segment at 444–464 (LLIPFLYPVVAFSLCVLAWIG) threads the bilayer.

This sequence belongs to the paxM FAD-dependent monooxygenase family. Requires FAD as cofactor.

It localises to the membrane. It carries out the reaction (2E,6E,10E)-geranylgeranyl-triacetate lactone + AH2 + O2 = (S)-(2E,6E,10E)-epoxygeranylgeranyl-triacetate lactone + A + H2O. The protein operates within secondary metabolite biosynthesis; terpenoid biosynthesis. FAD-dependent monooxygenase spyC; part of the gene cluster that mediates the biosynthesis of meroterpenoids called sartorypyrones. Within the pathway, spyC catalyzes the epoxidation of geranylgeranyl-triacetate lactone at the terminal olein to yield epoxygeranylgeranyl-triacetate lactone. The biosynthesis of sartorypyrones begins with the production of triacetic acid lactone (TAL) by the NR-PKS spyA using one molecule of acetyl-CoA and two molecules of malonyl-CoA. The prenyltransferase spyF then conjugates geranylgeranyl pyrophosphate (GGPP) to TAL to form geranylgeranyl-triacetate lactone, for which the pathway-specific geranylgeranyl pyrophosphate synthase (GGPS) spyE is required to provide GGPP. Subsequently, geranylgeranyl-triacetate lactone is epoxidized at the terminal olein by the FAD-dependent monooxygenase spyC, followed by cyclization of the terpenoid component catalyzed by the terpene cyclase spyD to produce both the bicyclic sartorypyrone F and the monocyclic sartorypyrone D. Finally, the last step of the biosynthesis involves the acetylation of the meroterpenoids sartorypyrones D and F by the acetyltransferase SpyB to produce sartorypyrones A and G, respectively. This Aspergillus fumigatus (strain ATCC MYA-4609 / CBS 101355 / FGSC A1100 / Af293) (Neosartorya fumigata) protein is FAD-dependent monooxygenase spyC.